A 66-amino-acid polypeptide reads, in one-letter code: Large ribosomal subunit protein bL33c (66 aa).

The protein belongs to the bacterial ribosomal protein bL33 family.

The protein localises to the plastid. Its subcellular location is the chloroplast. The chain is Large ribosomal subunit protein bL33c from Liriodendron tulipifera (Tuliptree).